Consider the following 124-residue polypeptide: MLKIGKLLTSSFFSYFLIGIVNTALHWGVFYACYNNLAFGQGRSNIVGFICAATFSFFANARCSFKVSATKARYFIFIFFMGAMSYLFGVLFDLLALSPIFTLFTFSLFSLVLGYCASKYFIFR.

4 helical membrane passes run F12–A32, N45–F65, F75–L95, and A96–C116.

It belongs to the GtrA family.

The protein localises to the cell membrane. It participates in bacterial outer membrane biogenesis; lipopolysaccharide biosynthesis. Its function is as follows. Involved in O antigen modification. Involved in the translocation of bactoprenol-linked glucose across the cytoplasmic membrane. This Shigella flexneri protein is Bactoprenol-linked glucose translocase (rfbI).